The primary structure comprises 51 residues: Large ribosomal subunit protein eL40 (51 aa).

4 residues coordinate Zn(2+): Cys-17, Cys-20, Cys-31, and Cys-34.

Belongs to the eukaryotic ribosomal protein eL40 family. In terms of assembly, part of the 50S ribosomal subunit. The cofactor is Zn(2+).

The protein is Large ribosomal subunit protein eL40 of Thermococcus kodakarensis (strain ATCC BAA-918 / JCM 12380 / KOD1) (Pyrococcus kodakaraensis (strain KOD1)).